The following is a 179-amino-acid chain: Large ribosomal subunit protein uL6 (179 aa).

This sequence belongs to the universal ribosomal protein uL6 family. In terms of assembly, part of the 50S ribosomal subunit.

This protein binds to the 23S rRNA, and is important in its secondary structure. It is located near the subunit interface in the base of the L7/L12 stalk, and near the tRNA binding site of the peptidyltransferase center. In Chlorobium luteolum (strain DSM 273 / BCRC 81028 / 2530) (Pelodictyon luteolum), this protein is Large ribosomal subunit protein uL6.